The primary structure comprises 114 residues: T cell receptor beta variable 19 (114 aa).

Residues 1–21 (MSNQVLCCVVLCLLGANTVDG) form the signal peptide. An Ig-like domain is found at 22–114 (GITQSPKYLF…TAFYLCASSI (93 aa)). An N-linked (GlcNAc...) asparagine glycan is attached at N37. A disulfide bond links C42 and C110.

In terms of assembly, alpha-beta TR is a heterodimer composed of an alpha and beta chain; disulfide-linked. The alpha-beta TR is associated with the transmembrane signaling CD3 coreceptor proteins to form the TR-CD3 (TcR or TCR). The assembly of alpha-beta TR heterodimers with CD3 occurs in the endoplasmic reticulum where a single alpha-beta TR heterodimer associates with one CD3D-CD3E heterodimer, one CD3G-CD3E heterodimer and one CD247 homodimer forming a stable octameric structure. CD3D-CD3E and CD3G-CD3E heterodimers preferentially associate with TR alpha and TR beta chains, respectively. The association of the CD247 homodimer is the last step of TcR assembly in the endoplasmic reticulum and is required for transport to the cell surface. As to quaternary structure, (Microbial infection) Interacts with Staphylococcus aureus enterotoxin type B/SEB.

It localises to the cell membrane. Its function is as follows. V region of the variable domain of T cell receptor (TR) beta chain that participates in the antigen recognition. Alpha-beta T cell receptors are antigen specific receptors which are essential to the immune response and are present on the cell surface of T lymphocytes. Recognize peptide-major histocompatibility (MH) (pMH) complexes that are displayed by antigen presenting cells (APC), a prerequisite for efficient T cell adaptive immunity against pathogens. Binding of alpha-beta TR to pMH complex initiates TR-CD3 clustering on the cell surface and intracellular activation of LCK that phosphorylates the ITAM motifs of CD3G, CD3D, CD3E and CD247 enabling the recruitment of ZAP70. In turn ZAP70 phosphorylates LAT, which recruits numerous signaling molecules to form the LAT signalosome. The LAT signalosome propagates signal branching to three major signaling pathways, the calcium, the mitogen-activated protein kinase (MAPK) kinase and the nuclear factor NF-kappa-B (NF-kB) pathways, leading to the mobilization of transcription factors that are critical for gene expression and essential for T cell growth and differentiation. The T cell repertoire is generated in the thymus, by V-(D)-J rearrangement. This repertoire is then shaped by intrathymic selection events to generate a peripheral T cell pool of self-MH restricted, non-autoaggressive T cells. Post-thymic interaction of alpha-beta TR with the pMH complexes shapes TR structural and functional avidity. The protein is T cell receptor beta variable 19 of Homo sapiens (Human).